We begin with the raw amino-acid sequence, 343 residues long: Polyprenal reductase 2 (343 aa).

6 helical membrane passes run 12 to 32 (GAWI…SIPT), 66 to 86 (FAHF…ATWM), 164 to 184 (MHIL…LSLC), 223 to 243 (PLMK…WGWI), 266 to 286 (IIPY…AEIV), and 291 to 311 (LLIA…FVAA).

Belongs to the steroid 5-alpha reductase family. Polyprenal reductase subfamily. In terms of tissue distribution, expressed in roots, leaves, stems and flowers.

It localises to the endoplasmic reticulum membrane. The enzyme catalyses a di-trans,poly-cis-dolichal + NADP(+) = a di-trans,poly-cis-polyprenal + NADPH + H(+). It participates in protein modification; protein glycosylation. Plays a key role in early steps of protein N-linked glycosylation by being involved in the conversion of polyprenol into dolichol. Acts as a polyprenal reductase that mediates the reduction of polyprenal into dolichal in a NADP-dependent mechanism. Dolichols are required for the synthesis of dolichol-linked monosaccharides and the oligosaccharide precursor used for N-glycosylation. Involved in the regulation of plant growth and reproductive processes. In Arabidopsis thaliana (Mouse-ear cress), this protein is Polyprenal reductase 2.